The sequence spans 460 residues: Bifunctional protein GlmU (460 aa).

A pyrophosphorylase region spans residues 1 to 235 (MALSAAIILA…PLSVEGVNDR (235 aa)). Residues 9–12 (LAAG), Lys-23, Gln-76, and 81–82 (GT) each bind UDP-N-acetyl-alpha-D-glucosamine. Asp-109 provides a ligand contact to Mg(2+). The UDP-N-acetyl-alpha-D-glucosamine site is built by Gly-146, Glu-161, Asn-176, and Asn-233. Position 233 (Asn-233) interacts with Mg(2+). The linker stretch occupies residues 236–256 (VQLAALAKAHNKRVCEHWMRE). Positions 257 to 460 (GVTILDPDTT…VEGWKPEWER (204 aa)) are N-acetyltransferase. Residues Arg-338 and Lys-356 each coordinate UDP-N-acetyl-alpha-D-glucosamine. His-368 (proton acceptor) is an active-site residue. UDP-N-acetyl-alpha-D-glucosamine is bound by residues Tyr-371 and Asn-382. Residues 391–392 (NY) and Ala-428 each bind acetyl-CoA.

The protein in the N-terminal section; belongs to the N-acetylglucosamine-1-phosphate uridyltransferase family. This sequence in the C-terminal section; belongs to the transferase hexapeptide repeat family. Homotrimer. Mg(2+) serves as cofactor.

It is found in the cytoplasm. It catalyses the reaction alpha-D-glucosamine 1-phosphate + acetyl-CoA = N-acetyl-alpha-D-glucosamine 1-phosphate + CoA + H(+). The enzyme catalyses N-acetyl-alpha-D-glucosamine 1-phosphate + UTP + H(+) = UDP-N-acetyl-alpha-D-glucosamine + diphosphate. It participates in nucleotide-sugar biosynthesis; UDP-N-acetyl-alpha-D-glucosamine biosynthesis; N-acetyl-alpha-D-glucosamine 1-phosphate from alpha-D-glucosamine 6-phosphate (route II): step 2/2. It functions in the pathway nucleotide-sugar biosynthesis; UDP-N-acetyl-alpha-D-glucosamine biosynthesis; UDP-N-acetyl-alpha-D-glucosamine from N-acetyl-alpha-D-glucosamine 1-phosphate: step 1/1. The protein operates within bacterial outer membrane biogenesis; LPS lipid A biosynthesis. Functionally, catalyzes the last two sequential reactions in the de novo biosynthetic pathway for UDP-N-acetylglucosamine (UDP-GlcNAc). The C-terminal domain catalyzes the transfer of acetyl group from acetyl coenzyme A to glucosamine-1-phosphate (GlcN-1-P) to produce N-acetylglucosamine-1-phosphate (GlcNAc-1-P), which is converted into UDP-GlcNAc by the transfer of uridine 5-monophosphate (from uridine 5-triphosphate), a reaction catalyzed by the N-terminal domain. The sequence is that of Bifunctional protein GlmU from Bifidobacterium adolescentis (strain ATCC 15703 / DSM 20083 / NCTC 11814 / E194a).